The chain runs to 181 residues: Oligoribonuclease (181 aa).

Residues 8-171 (LIWIDLEMTG…DDIRESVAEL (164 aa)) form the Exonuclease domain. Y129 is an active-site residue.

It belongs to the oligoribonuclease family.

It is found in the cytoplasm. 3'-to-5' exoribonuclease specific for small oligoribonucleotides. The chain is Oligoribonuclease from Yersinia pseudotuberculosis serotype O:1b (strain IP 31758).